The sequence spans 731 residues: 1,4-alpha-glucan branching enzyme GlgB (731 aa).

D411 functions as the Nucleophile in the catalytic mechanism. E464 acts as the Proton donor in catalysis.

Belongs to the glycosyl hydrolase 13 family. GlgB subfamily. In terms of assembly, monomer.

The enzyme catalyses Transfers a segment of a (1-&gt;4)-alpha-D-glucan chain to a primary hydroxy group in a similar glucan chain.. It functions in the pathway glycan biosynthesis; glycogen biosynthesis. In terms of biological role, catalyzes the formation of the alpha-1,6-glucosidic linkages in glycogen by scission of a 1,4-alpha-linked oligosaccharide from growing alpha-1,4-glucan chains and the subsequent attachment of the oligosaccharide to the alpha-1,6 position. The protein is 1,4-alpha-glucan branching enzyme GlgB of Mycobacterium tuberculosis (strain ATCC 25177 / H37Ra).